The primary structure comprises 172 residues: Acetolactate synthase small subunit (172 aa).

In terms of domain architecture, ACT spans 4-78; it reads TLSVLVEDEA…NILKVDNITE (75 aa).

The protein belongs to the acetolactate synthase small subunit family. In terms of assembly, dimer of large and small chains.

The protein resides in the plastid. It is found in the chloroplast. It catalyses the reaction 2 pyruvate + H(+) = (2S)-2-acetolactate + CO2. It participates in amino-acid biosynthesis; L-isoleucine biosynthesis; L-isoleucine from 2-oxobutanoate: step 1/4. It functions in the pathway amino-acid biosynthesis; L-valine biosynthesis; L-valine from pyruvate: step 1/4. This is Acetolactate synthase small subunit (ilvH) from Cyanidium caldarium (Red alga).